The following is a 54-amino-acid chain: Large ribosomal subunit protein bL33 (54 aa).

Belongs to the bacterial ribosomal protein bL33 family.

This Stenotrophomonas maltophilia (strain K279a) protein is Large ribosomal subunit protein bL33.